The following is a 340-amino-acid chain: Protein-lysine N-methyltransferase EEF2KMT (340 aa).

Methionine 1 is modified (N-acetylmethionine). Residues tryptophan 139, 165–167 (GSG), tryptophan 238, and alanine 257 each bind S-adenosyl-L-methionine.

This sequence belongs to the class I-like SAM-binding methyltransferase superfamily. EEF2KMT family. Interacts with FAM86B2 and FAM86C1P.

The protein localises to the cytoplasm. The catalysed reaction is L-lysyl-[protein] + 3 S-adenosyl-L-methionine = N(6),N(6),N(6)-trimethyl-L-lysyl-[protein] + 3 S-adenosyl-L-homocysteine + 3 H(+). Functionally, catalyzes the trimethylation of eukaryotic elongation factor 2 (EEF2) on 'Lys-525'. The polypeptide is Protein-lysine N-methyltransferase EEF2KMT (EEF2KMT) (Bos taurus (Bovine)).